The chain runs to 766 residues: Alpha-onocerin synthase LCD (766 aa).

7 PFTB repeats span residues 101 to 143 (LCRA…GALD), 151 to 192 (QREI…RLMG), 456 to 507 (QESY…STTD), 517 to 558 (IHEC…PGYK), 594 to 634 (IQEG…LASG), 643 to 684 (IQRA…HVVH), and 705 to 752 (LHRA…WALG). Aspartate 488 acts as the Proton donor in catalysis.

It belongs to the terpene cyclase/mutase family.

The catalysed reaction is pre-alpha-onocerin = alpha-onocerin. The protein operates within secondary metabolite biosynthesis; terpenoid biosynthesis. In terms of biological role, oxidosqualene cyclase involved in the biosynthesis of alpha-onocerin, a triterpenoid characterized by a symmetrical structure due to cyclizations at both termini of dioxidosqualene that inhibits acetylcholinesterase. Catalyzes the second half of the cyclization, exclusively from pre-alpha-onocerin. The protein is Alpha-onocerin synthase LCD of Lycopodium clavatum (Stag's-horn clubmoss).